The chain runs to 327 residues: Serum response factor homolog (327 aa).

The segment at 12-43 (QKLQNASPALPEGTSSTPTPSSSTGLLPNGKK) is disordered. Over residues 25-35 (TSSTPTPSSST) the composition is skewed to low complexity. Residues 45-105 (KGRVKIKMEY…GHVYTYATPK (61 aa)) form the MADS-box domain. The tract at residues 189–225 (TFGEDDYNNDESGDDSDSEEASSDIKEEYQGSPTMVK) is disordered. A compositionally biased stretch (acidic residues) spans 191-210 (GEDDYNNDESGDDSDSEEAS).

Expressed in muscle, varying with age, decreasing twofold during the first week of adulthood.

The protein localises to the nucleus. In terms of biological role, transcription factor. Regulates myogenesis, in cooperation with transcription factors hlh-1 and hnd-1. Required for maintenance of muscle in adulthood. This is Serum response factor homolog from Caenorhabditis elegans.